The primary structure comprises 390 residues: GTPase Obg/CgtA (390 aa).

Residues 1-159 form the Obg domain; sequence MKFVDEAVIK…RDIRLELLLL (159 aa). The OBG-type G domain maps to 160 to 333; it reads ADVGMLGMPN…LCMKLAEFMD (174 aa). GTP is bound by residues 166–173, 191–195, 213–216, 283–286, and 314–316; these read GMPNAGKS, FTTLV, DIPG, NKVD, and SAA. Residues Ser-173 and Thr-193 each contribute to the Mg(2+) site.

This sequence belongs to the TRAFAC class OBG-HflX-like GTPase superfamily. OBG GTPase family. In terms of assembly, monomer. Interacts with SpoT (AC Q9KNM2) in a yeast 2-hybrid assay. Mg(2+) is required as a cofactor.

The protein resides in the cytoplasm. Its function is as follows. Depletion experiments lead to gene down regulation and a dramatic increase in ppGpp levels, like those seen in the stringent response. There is no change in cell morphology in depletion experiments, but cells are very sensitive to the DNA-damaging agent hydroxyurea and are very elongated. Overexpression reduces growth and leads to elongated cells. Overexpression of proteins with C-terminal deletions of 29 or 62 amino acids showed fewer elongated cells. An essential GTPase which binds GTP, GDP and possibly (p)ppGpp with moderate affinity, with high nucleotide exchange rates and a fairly low GTP hydrolysis rate. It may play a role in control of the cell cycle, stress response, ribosome biogenesis and in those bacteria that undergo differentiation, in morphogenesis control. GTPase activity is stimulated by 50S ribosomal subunits. The sequence is that of GTPase Obg/CgtA from Vibrio cholerae serotype O1 (strain ATCC 39315 / El Tor Inaba N16961).